Consider the following 406-residue polypeptide: GTPase Obg (406 aa).

One can recognise an Obg domain in the interval 1-159 (MRFVDEAVIT…REIRLELKVL (159 aa)). Positions 120–143 (GGEGGLGNTHFKSSTNRAPRKCTT) are disordered. The 174-residue stretch at 160-333 (ADVGLLGMPN…VVYYLMDQIE (174 aa)) folds into the OBG-type G domain. GTP-binding positions include 166–173 (GMPNAGKS), 191–195 (FTTMV), 213–216 (DIPG), 283–286 (NKLD), and 314–316 (SGL). Mg(2+)-binding residues include Ser173 and Thr193. Residues 381 to 406 (ESMMDDDDDFDDDEDDGDVESIYVRD) form a disordered region. The segment covering 383–399 (MMDDDDDFDDDEDDGDV) has biased composition (acidic residues).

This sequence belongs to the TRAFAC class OBG-HflX-like GTPase superfamily. OBG GTPase family. As to quaternary structure, monomer. The cofactor is Mg(2+).

The protein localises to the cytoplasm. In terms of biological role, an essential GTPase which binds GTP, GDP and possibly (p)ppGpp with moderate affinity, with high nucleotide exchange rates and a fairly low GTP hydrolysis rate. Plays a role in control of the cell cycle, stress response, ribosome biogenesis and in those bacteria that undergo differentiation, in morphogenesis control. This chain is GTPase Obg, found in Acinetobacter baumannii (strain ACICU).